A 697-amino-acid polypeptide reads, in one-letter code: Elongation factor G 2 (697 aa).

The tr-type G domain maps to 5 to 280 (SKYRNIGIFA…AVVDYLPAPD (276 aa)). Residues 14–21 (AHVDAGKT), 78–82 (DTPGH), and 132–135 (NKLD) contribute to the GTP site.

It belongs to the TRAFAC class translation factor GTPase superfamily. Classic translation factor GTPase family. EF-G/EF-2 subfamily.

It is found in the cytoplasm. Functionally, catalyzes the GTP-dependent ribosomal translocation step during translation elongation. During this step, the ribosome changes from the pre-translocational (PRE) to the post-translocational (POST) state as the newly formed A-site-bound peptidyl-tRNA and P-site-bound deacylated tRNA move to the P and E sites, respectively. Catalyzes the coordinated movement of the two tRNA molecules, the mRNA and conformational changes in the ribosome. This Shewanella sp. (strain MR-7) protein is Elongation factor G 2.